Reading from the N-terminus, the 282-residue chain is Pantothenate synthetase (282 aa).

30–37 (MGYLHEGH) contributes to the ATP binding site. His-37 functions as the Proton donor in the catalytic mechanism. (R)-pantoate is bound at residue Gln-61. Residue Gln-61 participates in beta-alanine binding. ATP is bound at residue 147–150 (GMKD). Gln-153 is a (R)-pantoate binding site. ATP contacts are provided by residues Val-176 and 184 to 187 (KSSR).

This sequence belongs to the pantothenate synthetase family. Homodimer.

The protein localises to the cytoplasm. It catalyses the reaction (R)-pantoate + beta-alanine + ATP = (R)-pantothenate + AMP + diphosphate + H(+). It participates in cofactor biosynthesis; (R)-pantothenate biosynthesis; (R)-pantothenate from (R)-pantoate and beta-alanine: step 1/1. Functionally, catalyzes the condensation of pantoate with beta-alanine in an ATP-dependent reaction via a pantoyl-adenylate intermediate. This Bacillus cereus (strain ATCC 10987 / NRS 248) protein is Pantothenate synthetase.